A 154-amino-acid polypeptide reads, in one-letter code: Small ribosomal subunit protein uS15 (154 aa).

The disordered stretch occupies residues 1–23 (MNKKRDKGQSHSTRPARAGPPRW).

Belongs to the universal ribosomal protein uS15 family. As to quaternary structure, part of the 30S ribosomal subunit.

This is Small ribosomal subunit protein uS15 from Staphylothermus marinus (strain ATCC 43588 / DSM 3639 / JCM 9404 / F1).